Consider the following 326-residue polypeptide: Microtubule-associated protein RP/EB family member 2 (326 aa).

The residue at position 9 (S9) is a Phosphoserine. Residues 56 to 158 enclose the Calponin-homology (CH) domain; sequence TMSRHDIIAW…FIQWFKKFYD (103 aa). A Phosphotyrosine modification is found at Y166. Disordered stretches follow at residues 170 to 239 and 298 to 326; these read EARQ…DKDL and ASDE…QEEY. Residues 186 to 326 are DCTN1-binding; the sequence is QIFNLPKKSH…EQQPQQQEEY (141 aa). The segment covering 199–233 has biased composition (low complexity); sequence SPTAGAAKSSPASKPGSTPSRPSSAKRASSSGSAS. Phosphoserine is present on residues S218 and S235. The 71-residue stretch at 235–305 folds into the EB1 C-terminal domain; it reads SDKDLETQVI…LYASDEHEGH (71 aa). The interval 258–301 is APC-binding; that stretch reads EGVEKERDFYFGKLREIELLCQEHGQENDDLVQRLMDVLYASDE. The span at 299–316 shows a compositional bias: basic and acidic residues; sequence SDEHEGHPEEPEAEEQVH. The segment covering 317–326 has biased composition (low complexity); that stretch reads EQQPQQQEEY.

It belongs to the MAPRE family. In terms of assembly, interacts with DCTN1. Interacts with APC (via C-terminal). Interacts with monomeric and polymerized tubulin. Interacts with SLAIN1. Interacts (via the N-terminal region) with BAG1. Interacts with ASB14. Interacts with HAX1; this interaction is essential for epidermal cell migration. In terms of processing, phosphorylated at Ser-235 by CK2 leading to enhanced cell adhesion. Phosphorylated by CDK1 and AURKB during mitosis reduces the binding affinity of MAPRE2 for microtubules. Post-translationally, ubiquitinated in an ASB14-dependent manner; leading to proteasomal degradation.

Its subcellular location is the cytoplasm. It is found in the cytoskeleton. In terms of biological role, adapter protein that is involved in microtubule polymerization, and spindle function by stabilizing microtubules and anchoring them at centrosomes. Therefore, ensures mitotic progression and genome stability. Acts as a central regulator of microtubule reorganization in apico-basal epithelial differentiation. Plays a role during oocyte meiosis by regulating microtubule dynamics. Participates in neurite growth by interacting with plexin B3/PLXNB3 and microtubule reorganization during apico-basal epithelial differentiation. Also plays an essential role for cell migration and focal adhesion dynamics. Mechanistically, recruits HAX1 to microtubules in order to regulate focal adhesion dynamics. This is Microtubule-associated protein RP/EB family member 2 (MAPRE2) from Bos taurus (Bovine).